We begin with the raw amino-acid sequence, 504 residues long: D-alanine--D-alanyl carrier protein ligase (504 aa).

152-153 (TS) lines the ATP pocket. Asp-197 contributes to the D-alanine binding site. ATP is bound at residue 292–297 (NTYGPT). A D-alanine-binding site is contributed by Val-301. Residues Asp-383, 394–397 (YNGR), and Lys-492 contribute to the ATP site. A D-alanine-binding site is contributed by Lys-492.

Belongs to the ATP-dependent AMP-binding enzyme family. DltA subfamily.

It is found in the cytoplasm. The catalysed reaction is holo-[D-alanyl-carrier protein] + D-alanine + ATP = D-alanyl-[D-alanyl-carrier protein] + AMP + diphosphate. It participates in cell wall biogenesis; lipoteichoic acid biosynthesis. In terms of biological role, catalyzes the first step in the D-alanylation of lipoteichoic acid (LTA), the activation of D-alanine and its transfer onto the D-alanyl carrier protein (Dcp) DltC. In an ATP-dependent two-step reaction, forms a high energy D-alanyl-AMP intermediate, followed by transfer of the D-alanyl residue as a thiol ester to the phosphopantheinyl prosthetic group of the Dcp. D-alanylation of LTA plays an important role in modulating the properties of the cell wall in Gram-positive bacteria, influencing the net charge of the cell wall. This is D-alanine--D-alanyl carrier protein ligase from Bacillus cytotoxicus (strain DSM 22905 / CIP 110041 / 391-98 / NVH 391-98).